Consider the following 338-residue polypeptide: 1-aminocyclopropane-1-carboxylate deaminase (338 aa).

At Lys-51 the chain carries N6-(pyridoxal phosphate)lysine. Ser-78 (nucleophile) is an active-site residue.

The protein belongs to the ACC deaminase/D-cysteine desulfhydrase family. Homotrimer. Requires pyridoxal 5'-phosphate as cofactor.

It catalyses the reaction 1-aminocyclopropane-1-carboxylate + H2O = 2-oxobutanoate + NH4(+). Functionally, catalyzes a cyclopropane ring-opening reaction, the irreversible conversion of 1-aminocyclopropane-1-carboxylate (ACC) to ammonia and alpha-ketobutyrate. Allows growth on ACC as a nitrogen source. In Burkholderia cenocepacia (strain HI2424), this protein is 1-aminocyclopropane-1-carboxylate deaminase.